Consider the following 144-residue polypeptide: Large ribosomal subunit protein uL15 (144 aa).

A disordered region spans residues 20 to 49 (GRGIGSGLGKTGGRGHKGQKSRSGGFHKVG). A compositionally biased stretch (gly residues) spans 21–31 (RGIGSGLGKTG).

Belongs to the universal ribosomal protein uL15 family. Part of the 50S ribosomal subunit.

Binds to the 23S rRNA. The chain is Large ribosomal subunit protein uL15 from Neisseria meningitidis serogroup C (strain 053442).